An 87-amino-acid polypeptide reads, in one-letter code: Beta-toxin Cn5 (87 aa).

The first 19 residues, 1–19, serve as a signal peptide directing secretion; that stretch reads MNSLLMITACLFLIGTVWA. Positions 20-85 constitute an LCN-type CS-alpha/beta domain; sequence KEGYLVNKST…TYPLPNKSCS (66 aa). Disulfide bonds link cysteine 31-cysteine 84, cysteine 35-cysteine 60, cysteine 44-cysteine 65, and cysteine 48-cysteine 67.

The protein belongs to the long (4 C-C) scorpion toxin superfamily. Sodium channel inhibitor family. Beta subfamily. In terms of tissue distribution, expressed by the venom gland.

It localises to the secreted. Beta toxins bind voltage-independently at site-4 of sodium channels (Nav) and shift the voltage of activation toward more negative potentials thereby affecting sodium channel activation and promoting spontaneous and repetitive firing. This toxin is lethal to crustaceans (freshwater crayfish (Cambarellus montezumae spp.)), it provokes a reversible paralysis to insects (crickets (Achaeta spp.)), but is not toxic to mice. At high concentrations, it does displace the (beta) mammal-specific toxin Cn2 from rat brain synaptosomes. In Centruroides noxius (Mexican scorpion), this protein is Beta-toxin Cn5.